A 352-amino-acid polypeptide reads, in one-letter code: Inorganic triphosphatase (352 aa).

The region spanning 6 to 203 (LQEIELKLAI…KRGYLLGSKQ (198 aa)) is the CYTH domain.

The enzyme catalyses triphosphate + H2O = phosphate + diphosphate. Functionally, involved in the hydrolysis of the beta-gamma-phosphoanhydride linkage of triphosphate-containing substrates (inorganic or nucleoside-linked). Catalyzes the hydrolysis of inorganic triphosphate (PPPi), which could be cytotoxic because of its high affinity for calcium ion, thereby interfering with calcium signaling. This is Inorganic triphosphatase from Haemophilus influenzae (strain ATCC 51907 / DSM 11121 / KW20 / Rd).